The sequence spans 318 residues: NADH-ubiquinone oxidoreductase chain 1 (318 aa).

8 consecutive transmembrane segments (helical) span residues Phe2–Leu22, Thr76–Ile96, Leu102–Ala122, Leu146–Ile166, Tyr171–Ala191, Ala217–Leu237, Glu253–Val273, and Leu294–Ile314.

It belongs to the complex I subunit 1 family. In terms of assembly, core subunit of respiratory chain NADH dehydrogenase (Complex I) which is composed of 45 different subunits.

It localises to the mitochondrion inner membrane. It catalyses the reaction a ubiquinone + NADH + 5 H(+)(in) = a ubiquinol + NAD(+) + 4 H(+)(out). Core subunit of the mitochondrial membrane respiratory chain NADH dehydrogenase (Complex I) which catalyzes electron transfer from NADH through the respiratory chain, using ubiquinone as an electron acceptor. Essential for the catalytic activity and assembly of complex I. The protein is NADH-ubiquinone oxidoreductase chain 1 (MT-ND1) of Lemur catta (Ring-tailed lemur).